The chain runs to 568 residues: Arginine--tRNA ligase (568 aa).

A 'HIGH' region motif is present at residues 129–139; sequence ANPTGPLHIGH.

Belongs to the class-I aminoacyl-tRNA synthetase family. In terms of assembly, monomer.

The protein localises to the cytoplasm. It catalyses the reaction tRNA(Arg) + L-arginine + ATP = L-arginyl-tRNA(Arg) + AMP + diphosphate. The chain is Arginine--tRNA ligase from Wolbachia pipientis wMel.